The primary structure comprises 103 residues: Large ribosomal subunit protein uL24 (103 aa).

The protein belongs to the universal ribosomal protein uL24 family. In terms of assembly, part of the 50S ribosomal subunit.

One of two assembly initiator proteins, it binds directly to the 5'-end of the 23S rRNA, where it nucleates assembly of the 50S subunit. Functionally, one of the proteins that surrounds the polypeptide exit tunnel on the outside of the subunit. The protein is Large ribosomal subunit protein uL24 of Actinobacillus succinogenes (strain ATCC 55618 / DSM 22257 / CCUG 43843 / 130Z).